Consider the following 987-residue polypeptide: ATP-dependent 6-phosphofructokinase subunit alpha (987 aa).

Residues 1-580 are N-terminal catalytic PFK domain 1; that stretch reads MQSQDSCYGV…LYENFLSTTV (580 aa). The residue at position 3 (Ser3) is a Phosphoserine. Lys89 is covalently cross-linked (Glycyl lysine isopeptide (Lys-Gly) (interchain with G-Cter in ubiquitin)). Residues Ser166, Ser179, Ser185, Ser189, and Ser192 each carry the phosphoserine modification. Gly215 is an ATP binding site. A Phosphoserine modification is found at Ser217. Residues 278–279 and 308–311 contribute to the ATP site; these read RS and GDGS. Asp309 is a Mg(2+) binding site. Residues 354 to 356, Arg391, and 398 to 400 contribute to the beta-D-fructose 6-phosphate site; these read SID and MGR. Residue Asp356 is the Proton acceptor of the active site. Phosphothreonine is present on Thr450. Beta-D-fructose 6-phosphate contacts are provided by residues Glu455, Lys482, and 488–491; that span reads HVQR. Positions 581–594 are interdomain linker; the sequence is KDDGSELLPVSDRL. The tract at residues 595-987 is C-terminal regulatory PFK domain 2; sequence NIGIVHVGAP…EVAALAAENK (393 aa). Lys625 is covalently cross-linked (Glycyl lysine isopeptide (Lys-Gly) (interchain with G-Cter in ubiquitin)). Residues Arg665, 722-726, Arg760, 767-769, Glu827, Arg853, 859-862, and Arg952 each bind beta-D-fructose 2,6-bisphosphate; these read TVSNN, QGG, and HVQQ.

It belongs to the phosphofructokinase type A (PFKA) family. ATP-dependent PFK group I subfamily. Eukaryotic two domain clade 'E' sub-subfamily. In terms of assembly, heterooctamer of 4 alpha and 4 beta chains. Mg(2+) serves as cofactor.

Its subcellular location is the cytoplasm. The protein resides in the mitochondrion outer membrane. The enzyme catalyses beta-D-fructose 6-phosphate + ATP = beta-D-fructose 1,6-bisphosphate + ADP + H(+). It participates in carbohydrate degradation; glycolysis; D-glyceraldehyde 3-phosphate and glycerone phosphate from D-glucose: step 3/4. Its activity is regulated as follows. Allosterically activated by ADP, AMP, or fructose 2,6-bisphosphate, and allosterically inhibited by ATP or citrate. Its function is as follows. Catalyzes the phosphorylation of D-fructose 6-phosphate to fructose 1,6-bisphosphate by ATP, the first committing step of glycolysis. The protein is ATP-dependent 6-phosphofructokinase subunit alpha (PFK1) of Saccharomyces cerevisiae (strain ATCC 204508 / S288c) (Baker's yeast).